A 561-amino-acid chain; its full sequence is Urocanate hydratase (561 aa).

NAD(+) contacts are provided by residues 52 to 53, Gln130, 176 to 178, Glu196, Arg201, 242 to 243, 263 to 267, 273 to 274, and Tyr322; these read GG, GMG, NA, QTSAH, and YL. Cys410 is an active-site residue. Residue Gly492 participates in NAD(+) binding.

The protein belongs to the urocanase family. It depends on NAD(+) as a cofactor.

It localises to the cytoplasm. The catalysed reaction is 4-imidazolone-5-propanoate = trans-urocanate + H2O. The protein operates within amino-acid degradation; L-histidine degradation into L-glutamate; N-formimidoyl-L-glutamate from L-histidine: step 2/3. Functionally, catalyzes the conversion of urocanate to 4-imidazolone-5-propionate. The chain is Urocanate hydratase from Salmonella agona (strain SL483).